Consider the following 562-residue polypeptide: Calmodulin-binding protein 60 F (562 aa).

The interval 1–22 is disordered; it reads MENSMNNRGHGHNQEHADNLPE. The calmodulin-binding stretch occupies residues 5-84; the sequence is MNNRGHGHNQ…STSRSTEPNK (80 aa). Basic and acidic residues predominate over residues 12–22; it reads HNQEHADNLPE. The tract at residues 154–273 is DNA-binding; that stretch reads EDDKDWTREH…ALHKKLLKSN (120 aa).

The protein belongs to the plant ACBP60 protein family. Interacts with calmodulin (CaM).

Its subcellular location is the nucleus. Transcription activator that binds DNA in a sequence-specific manner, likely 5'-GAAATTTTGG-3', to promote the expression of target genes. This chain is Calmodulin-binding protein 60 F, found in Arabidopsis thaliana (Mouse-ear cress).